Consider the following 310-residue polypeptide: Prohibitin-2 (310 aa).

A helical; Signal-anchor for type II membrane protein membrane pass occupies residues Phe38–Leu58. The segment at Asp130 to Asp144 is interaction with ATG8. Positions Tyr138–Leu141 match the AIM motif. The stretch at Asn212 to Glu253 forms a coiled coil.

This sequence belongs to the prohibitin family. As to quaternary structure, the mitochondrial prohibitin complex consists of two subunits (PHB1 and PHB2). The subunits assemble into a membrane-associated ring-shaped supercomplex of approximately 1 mDa. The mitochondrial prohibitin complex interacts with the m-AAA protease, a heterohexamer composed of YTA12/RCA1 and YTA10/AFG3. The mitochondrial prohibitin complex interacts with ATG8 and the interaction may support mitophagosome assembly. The N-terminus is blocked.

Its subcellular location is the mitochondrion inner membrane. Its function is as follows. Prohibitin probably acts as a holdase/unfoldase for the stabilization of newly synthesized mitochondrial proteins. Involved in mitophagy; may act as an adapter for ATG8 that supports mitophagosome assembly. Negatively regulates the proteolytic processing of ATG32 via the i-AAA protease. Acts as a negative regulator of the m-AAA protease. This is Prohibitin-2 (PHB2) from Saccharomyces cerevisiae (strain ATCC 204508 / S288c) (Baker's yeast).